Reading from the N-terminus, the 1374-residue chain is DNA-directed RNA polymerase subunit beta (1374 aa).

It belongs to the RNA polymerase beta chain family. In terms of assembly, the RNAP catalytic core consists of 2 alpha, 1 beta, 1 beta' and 1 omega subunit. When a sigma factor is associated with the core the holoenzyme is formed, which can initiate transcription.

It catalyses the reaction RNA(n) + a ribonucleoside 5'-triphosphate = RNA(n+1) + diphosphate. DNA-dependent RNA polymerase catalyzes the transcription of DNA into RNA using the four ribonucleoside triphosphates as substrates. The protein is DNA-directed RNA polymerase subunit beta of Acidovorax sp. (strain JS42).